A 529-amino-acid chain; its full sequence is Delayed-rectifier potassium channel regulatory subunit KCNS1 (529 aa).

The Cytoplasmic portion of the chain corresponds to 1-217 (MLMLLVRGTR…LTMENPGYSL (217 aa)). A helical membrane pass occupies residues 218–239 (PSKLFSCVSISVVLASIAAMCI). The Extracellular segment spans residues 240–270 (HSLPEYQAREAAAAVAAVAAGRSAEGVRDDP). Residues 271-293 (VLRRLEYFCIAWFSFEVSSRLLL) form a helical membrane-spanning segment. Residues 294 to 304 (APSTRNFFCHP) are Cytoplasmic-facing. A helical membrane pass occupies residues 305-322 (LNLIDIVSVLPFYLTLLA). The Extracellular portion of the chain corresponds to 323–340 (GAALGDHGGTGGKEFGHL). The helical; Voltage-sensor transmembrane segment at 341–361 (GKVVQVFRLMRIFRVLKLARH) threads the bilayer. The Cytoplasmic portion of the chain corresponds to 362 to 376 (STGLRSLGATLKHSY). Residues 377-398 (REVGILLLYLAVGVSVFSGVAY) form a helical membrane-spanning segment. The Extracellular segment spans residues 399–411 (TAEKEEHVGFDTI). The helical intramembrane region spans 412–423 (PACWWWGTVSMT). The short motif at 424 to 429 (TVGYGD) is the Selectivity filter element. The stretch at 424-431 (TVGYGDVV) is an intramembrane region. Residues 432-438 (PVTVAGK) are Extracellular-facing. A helical membrane pass occupies residues 439-467 (LAASGCILGGILVVALPITIIFNKFSHFY). The Cytoplasmic segment spans residues 468–529 (RRQKALEAAV…PSEPPHSQMY (62 aa)). The interval 494-529 (GVSEASLETSRETSQEGRSADLETQVPSEPPHSQMY) is disordered. Residues 502–514 (TSRETSQEGRSAD) show a composition bias toward basic and acidic residues.

Belongs to the potassium channel family. S (TC 1.A.1.2) subfamily. Kv9.1/KCNS1 sub-subfamily. As to quaternary structure, heterotetramer with KCNB1. Heterotetramer with KCNB2. Does not form homomultimers.

The protein localises to the cell membrane. Functionally, potassium channel regulatory subunit that modulate the delayed rectifier voltage-gated potassium channel activity of KCNB1 and KCNB2 by altering their kinetics, expression levels, and shifting the half-inactivation potential to more polarized values. While it does not form functional channels on its own, it can form functional heterotetrameric channels with KCNB1 and KCNB2. Each regulatory subunit has unique regulatory properties that can lead to extensive inhibition, significant changes in kinetics, and/or substantial shifts in the voltage dependencies of the inactivation process. This chain is Delayed-rectifier potassium channel regulatory subunit KCNS1, found in Aotus nancymaae (Ma's night monkey).